The following is a 214-amino-acid chain: Large ribosomal subunit protein uL3 (214 aa).

Residues 134–161 are disordered; that stretch reads THGNSLSHRAPGSIGQCQTPGRVMKGKK. Position 151 is an N5-methylglutamine (glutamine 151).

This sequence belongs to the universal ribosomal protein uL3 family. Part of the 50S ribosomal subunit. Forms a cluster with proteins L14 and L19. Post-translationally, methylated by PrmB.

One of the primary rRNA binding proteins, it binds directly near the 3'-end of the 23S rRNA, where it nucleates assembly of the 50S subunit. This Teredinibacter turnerae (strain ATCC 39867 / T7901) protein is Large ribosomal subunit protein uL3.